Here is a 98-residue protein sequence, read N- to C-terminus: Aspartyl/glutamyl-tRNA(Asn/Gln) amidotransferase subunit C (98 aa).

Residues 76–98 (QVLSGAPDAEDGRFKVPAILEED) form a disordered region.

This sequence belongs to the GatC family. Heterotrimer of A, B and C subunits.

It catalyses the reaction L-glutamyl-tRNA(Gln) + L-glutamine + ATP + H2O = L-glutaminyl-tRNA(Gln) + L-glutamate + ADP + phosphate + H(+). It carries out the reaction L-aspartyl-tRNA(Asn) + L-glutamine + ATP + H2O = L-asparaginyl-tRNA(Asn) + L-glutamate + ADP + phosphate + 2 H(+). Functionally, allows the formation of correctly charged Asn-tRNA(Asn) or Gln-tRNA(Gln) through the transamidation of misacylated Asp-tRNA(Asn) or Glu-tRNA(Gln) in organisms which lack either or both of asparaginyl-tRNA or glutaminyl-tRNA synthetases. The reaction takes place in the presence of glutamine and ATP through an activated phospho-Asp-tRNA(Asn) or phospho-Glu-tRNA(Gln). This is Aspartyl/glutamyl-tRNA(Asn/Gln) amidotransferase subunit C from Renibacterium salmoninarum (strain ATCC 33209 / DSM 20767 / JCM 11484 / NBRC 15589 / NCIMB 2235).